A 244-amino-acid polypeptide reads, in one-letter code: DNA repair protein RecO (244 aa).

Belongs to the RecO family.

Functionally, involved in DNA repair and RecF pathway recombination. This is DNA repair protein RecO from Geobacter metallireducens (strain ATCC 53774 / DSM 7210 / GS-15).